The chain runs to 227 residues: Ornithine decarboxylase antizyme 1 (227 aa).

It belongs to the ODC antizyme family. As to quaternary structure, interacts with ODC1 and thereby sterically blocks ODC homodimerization. Forms a ternary complex with PSMB4 and OAZ1 before PSMB4 is incorporated into the 20S proteasome. Interacts with AZIN2; this interaction disrupts the interaction between the antizyme and ODC1. Interacts with FAM171A1.

Ornithine decarboxylase (ODC) antizyme protein that negatively regulates ODC activity and intracellular polyamine biosynthesis and uptake in response to increased intracellular polyamine levels. Binds to ODC monomers, inhibiting the assembly of the functional ODC homodimer, and targets the monomers for ubiquitin-independent proteolytic destruction by the 26S proteasome. Triggers ODC degradation by inducing the exposure of a cryptic proteasome-interacting surface of ODC. Stabilizes AZIN2 by interfering with its ubiquitination. Also inhibits cellular uptake of polyamines by inactivating the polyamine uptake transporter. SMAD1/OAZ1/PSMB4 complex mediates the degradation of the CREBBP/EP300 repressor SNIP1. Involved in the translocation of AZIN2 from ER-Golgi intermediate compartment (ERGIC) to the cytosol. This Mus musculus (Mouse) protein is Ornithine decarboxylase antizyme 1 (Oaz1).